The primary structure comprises 403 residues: Alkaline protease 1 (403 aa).

A signal peptide spans 1–21; it reads MHSFKRSLLLLGALLPAVFGA. Positions 22–124 are excised as a propeptide; sequence PVEPRRAAEK…QIWYIDALTS (103 aa). In terms of domain architecture, Inhibitor I9 spans 35-119; it reads KYIVTFKSGL…HVEEDQIWYI (85 aa). Residues 129–403 enclose the Peptidase S8 domain; that stretch reads PWGLGAISHK…NLLAYNGADE (275 aa). Catalysis depends on charge relay system residues Asp161 and His192. An N-linked (GlcNAc...) asparagine glycan is attached at Asn252. Ser348 functions as the Charge relay system in the catalytic mechanism.

It belongs to the peptidase S8 family.

The protein localises to the secreted. The enzyme catalyses Hydrolysis of proteins with broad specificity, and of Bz-Arg-OEt &gt; Ac-Tyr-OEt. Does not hydrolyze peptide amides.. In terms of biological role, secreted alkaline protease that allows assimilation of proteinaceous substrates. In Emericella nidulans (strain FGSC A4 / ATCC 38163 / CBS 112.46 / NRRL 194 / M139) (Aspergillus nidulans), this protein is Alkaline protease 1 (alp1).